The primary structure comprises 300 residues: ETS homologous factor (300 aa).

In terms of domain architecture, PNT spans 29–115 (STCNVSSGFF…SNLQHLKWNG (87 aa)). The disordered stretch occupies residues 183 to 202 (ESPDMKKEQDPPAKCHTKKH). Basic and acidic residues predominate over residues 185-195 (PDMKKEQDPPA). The segment at residues 207–289 (THLWEFIRDI…DGRRLVYKFG (83 aa)) is a DNA-binding region (ETS).

Belongs to the ETS family.

It localises to the nucleus. Transcriptional activator that may play a role in regulating epithelial cell differentiation and proliferation. May act as a repressor for a specific subset of ETS/AP-1-responsive genes, and as a modulator of the nuclear response to mitogen-activated protein kinase signaling cascades. Binds to DNA sequences containing the consensus nucleotide core sequence GGAA. Involved in regulation of TNFRSF10B/DR5 expression through Ets-binding sequences on the TNFRSF10B/DR5 promoter. This Pan troglodytes (Chimpanzee) protein is ETS homologous factor (EHF).